We begin with the raw amino-acid sequence, 110 residues long: Progonadoliberin-2 (110 aa).

The first 26 residues, Met1–Ala26, serve as a signal peptide directing secretion. The tract at residues Lys25–Val85 is disordered. At Gly36 the chain carries Glycine amide.

The protein belongs to the GnRH family. Midbrain.

Its subcellular location is the secreted. Its function is as follows. Stimulates the secretion of gonadotropins; it stimulates the secretion of both luteinizing and follicle-stimulating hormones. This Suncus murinus (Asian house shrew) protein is Progonadoliberin-2 (GNRH2).